The chain runs to 347 residues: Spermidine/putrescine import ATP-binding protein PotA (347 aa).

In terms of domain architecture, ABC transporter spans 6 to 238; it reads LEIKNLSHYY…PKTKFVADFI (233 aa). Residue 40-47 coordinates ATP; it reads GPSGCGKT.

It belongs to the ABC transporter superfamily. Spermidine/putrescine importer (TC 3.A.1.11.1) family. As to quaternary structure, the complex is composed of two ATP-binding proteins (PotA), two transmembrane proteins (PotB and PotC) and a solute-binding protein (PotD).

The protein resides in the cell inner membrane. It carries out the reaction ATP + H2O + polyamine-[polyamine-binding protein]Side 1 = ADP + phosphate + polyamineSide 2 + [polyamine-binding protein]Side 1.. Functionally, part of the ABC transporter complex PotABCD involved in spermidine/putrescine import. Responsible for energy coupling to the transport system. The chain is Spermidine/putrescine import ATP-binding protein PotA from Borreliella afzelii (strain PKo) (Borrelia afzelii).